A 530-amino-acid chain; its full sequence is Metal transporter Nramp2 (530 aa).

The tract at residues 1–35 (MENDVKENLEEEEDRLLPPPPPSQSLPSTDSESEA) is disordered. Helical transmembrane passes span 68-88 (LWLF…PGNL), 96-116 (AIAG…GLLI), 153-173 (LALI…IQIL), 177-197 (FLPL…FLFL), 205-225 (LEAV…WMFG), 251-271 (AVGV…SALV), 297-317 (VALF…AKGF), 339-359 (FGGG…AAGQ), 395-415 (IVPT…LDVL), 418-438 (WLNV…LTLV), 456-476 (IAWT…LDFF), and 484-504 (LFGV…VYLI).

Belongs to the NRAMP (TC 2.A.55) family.

Its subcellular location is the membrane. Seems to be involved in iron uptake. This Arabidopsis thaliana (Mouse-ear cress) protein is Metal transporter Nramp2 (NRAMP2).